Consider the following 702-residue polypeptide: Ribosomal RNA large subunit methyltransferase K/L (702 aa).

In terms of domain architecture, THUMP spans 43–154; it reads LIYQSLMWSR…KETASIALDL (112 aa).

Belongs to the methyltransferase superfamily. RlmKL family.

It is found in the cytoplasm. It catalyses the reaction guanosine(2445) in 23S rRNA + S-adenosyl-L-methionine = N(2)-methylguanosine(2445) in 23S rRNA + S-adenosyl-L-homocysteine + H(+). It carries out the reaction guanosine(2069) in 23S rRNA + S-adenosyl-L-methionine = N(2)-methylguanosine(2069) in 23S rRNA + S-adenosyl-L-homocysteine + H(+). Its function is as follows. Specifically methylates the guanine in position 2445 (m2G2445) and the guanine in position 2069 (m7G2069) of 23S rRNA. In Salmonella paratyphi B (strain ATCC BAA-1250 / SPB7), this protein is Ribosomal RNA large subunit methyltransferase K/L.